The chain runs to 336 residues: Nicotinate-nucleotide--dimethylbenzimidazole phosphoribosyltransferase (336 aa).

Glutamate 304 functions as the Proton acceptor in the catalytic mechanism.

The protein belongs to the CobT family.

It carries out the reaction 5,6-dimethylbenzimidazole + nicotinate beta-D-ribonucleotide = alpha-ribazole 5'-phosphate + nicotinate + H(+). The protein operates within nucleoside biosynthesis; alpha-ribazole biosynthesis; alpha-ribazole from 5,6-dimethylbenzimidazole: step 1/2. Its function is as follows. Catalyzes the synthesis of alpha-ribazole-5'-phosphate from nicotinate mononucleotide (NAMN) and 5,6-dimethylbenzimidazole (DMB). This is Nicotinate-nucleotide--dimethylbenzimidazole phosphoribosyltransferase from Ruegeria sp. (strain TM1040) (Silicibacter sp.).